The chain runs to 132 residues: Fatty acid-binding protein 9 (132 aa).

4 positions are modified to phosphoserine: S13, S14, S44, and S91.

The protein belongs to the calycin superfamily. Fatty-acid binding protein (FABP) family.

The protein resides in the cytoplasm. In Homo sapiens (Human), this protein is Fatty acid-binding protein 9 (FABP9).